The primary structure comprises 90 residues: DNA-directed RNA polymerase subunit omega (90 aa).

A disordered region spans residues 69-90 (RQEQQEQEAAELAAVSSIAHTR).

The protein belongs to the RNA polymerase subunit omega family. In terms of assembly, the RNAP catalytic core consists of 2 alpha, 1 beta, 1 beta' and 1 omega subunit. When a sigma factor is associated with the core the holoenzyme is formed, which can initiate transcription.

It carries out the reaction RNA(n) + a ribonucleoside 5'-triphosphate = RNA(n+1) + diphosphate. Promotes RNA polymerase assembly. Latches the N- and C-terminal regions of the beta' subunit thereby facilitating its interaction with the beta and alpha subunits. This is DNA-directed RNA polymerase subunit omega from Vibrio atlanticus (strain LGP32) (Vibrio splendidus (strain Mel32)).